Reading from the N-terminus, the 715-residue chain is KIAVERDPVKTSFEKWAQPGHFSRTLAKGPSTTTWIWNLHADAHDFDSHTNDLEDISRKVFSAHFGQLAIIFIWLSGMYFHGARFSNYEAWLSDPTHVKPSAQVVWPIVGQEILNGDVGGGFQGIQITSGFFQIWRASGITSELQLYSTAIGGLIFAALMLFAGWFHYHKAAPKLTWFQDVESMLNHHLAGLLGLGSLSWAGHQVHVSLPINQLLDAGVDAKEIPLPHEFILNRDLMTQLYPSFAKGLTPFFTLNWSEYSDFSTFRGGLNPVTGGLWLTDTVHHHLAIAVLFLIAGHMYRTNWGIGHSLKEILEAHKGPFTGEGHKGLYEIFTTSWHAQLALNLAMLGSLTIIVAHHMYSMPPYPYLATDYGTQLSLFTHHMWIGGFLVVGAAAHAAIFMVRDYDPTTQYNNLLDRVLRHRDAIISHLNWACIFLGFHSFGLYIHNDTMSALGRPQDMFSDTAIQLQPVFAQWVQNTHAVAPFSTAPNAAASTSLTWGGIDLVAVGGKVALLPIPLGTADFLVHHIHAFTIHVTVLILLKGVLFARSSRLIPDKANLGFRFPCDGPGRGGTCQVSAWDHVFLGLFWMYNAISVVIFHFSWKMQSDVWGSVSDQKIVTHITGGNFAQSSITINGWLRDFLWAQASQVIQSYGSSLSAYGLLFLGAHFVWAFSLMFLFSGRGYWQELIESIVWAHNKLKVAPAIQPRALSIVQGRAE.

8 helical membrane passes run 60-83 (VFSA…FHGA), 146-169 (LYST…FHYH), 185-209 (LNHH…HVSL), 281-299 (TVHH…GHMY), 336-359 (WHAQ…HHMY), 375-401 (LSLF…IFMV), 423-445 (AIIS…LYIH), and 521-539 (FLVH…LILL). Positions 563 and 572 each coordinate [4Fe-4S] cluster. Transmembrane regions (helical) follow at residues 579-600 (HVFL…HFSW) and 654-676 (LSAY…MFLF). Position 665 (His-665) interacts with chlorophyll a'. Chlorophyll a is bound by residues Met-673 and Tyr-681. Trp-682 is a binding site for phylloquinone. Residues 714–715 (AE) form a helical membrane-spanning segment.

Belongs to the PsaA/PsaB family. In terms of assembly, the PsaA/B heterodimer binds the P700 chlorophyll special pair and subsequent electron acceptors. PSI consists of a core antenna complex that captures photons, and an electron transfer chain that converts photonic excitation into a charge separation. The eukaryotic PSI reaction center is composed of at least 11 subunits. P700 is a chlorophyll a/chlorophyll a' dimer, A0 is one or more chlorophyll a, A1 is one or both phylloquinones and FX is a shared 4Fe-4S iron-sulfur center. serves as cofactor.

Its subcellular location is the plastid. It localises to the chloroplast thylakoid membrane. The enzyme catalyses reduced [plastocyanin] + hnu + oxidized [2Fe-2S]-[ferredoxin] = oxidized [plastocyanin] + reduced [2Fe-2S]-[ferredoxin]. Its function is as follows. PsaA and PsaB bind P700, the primary electron donor of photosystem I (PSI), as well as the electron acceptors A0, A1 and FX. PSI is a plastocyanin-ferredoxin oxidoreductase, converting photonic excitation into a charge separation, which transfers an electron from the donor P700 chlorophyll pair to the spectroscopically characterized acceptors A0, A1, FX, FA and FB in turn. Oxidized P700 is reduced on the lumenal side of the thylakoid membrane by plastocyanin. The sequence is that of Photosystem I P700 chlorophyll a apoprotein A1 from Phlegmariurus squarrosus (Rock tassel fern).